Reading from the N-terminus, the 65-residue chain is Large ribosomal subunit protein bL35 (65 aa).

The protein belongs to the bacterial ribosomal protein bL35 family.

The chain is Large ribosomal subunit protein bL35 from Nitrosomonas eutropha (strain DSM 101675 / C91 / Nm57).